The chain runs to 444 residues: Ribosomal protein uS12 methylthiotransferase RimO (444 aa).

Residues 6-116 form the MTTase N-terminal domain; the sequence is PNIGFVSLGC…VMEHVHKYVP (111 aa). The [4Fe-4S] cluster site is built by Cys15, Cys51, Cys80, Cys148, Cys152, and Cys155. Positions 134–375 constitute a Radical SAM core domain; sequence LTPKHYAYLK…MQLQQEISAA (242 aa). The region spanning 378 to 444 is the TRAM domain; sequence QQKIGKTWKV…ADEYDLWGTC (67 aa).

Belongs to the methylthiotransferase family. RimO subfamily. [4Fe-4S] cluster serves as cofactor.

The protein resides in the cytoplasm. It catalyses the reaction L-aspartate(89)-[ribosomal protein uS12]-hydrogen + (sulfur carrier)-SH + AH2 + 2 S-adenosyl-L-methionine = 3-methylsulfanyl-L-aspartate(89)-[ribosomal protein uS12]-hydrogen + (sulfur carrier)-H + 5'-deoxyadenosine + L-methionine + A + S-adenosyl-L-homocysteine + 2 H(+). In terms of biological role, catalyzes the methylthiolation of an aspartic acid residue of ribosomal protein uS12. This chain is Ribosomal protein uS12 methylthiotransferase RimO, found in Actinobacillus succinogenes (strain ATCC 55618 / DSM 22257 / CCUG 43843 / 130Z).